The sequence spans 267 residues: Small ribosomal subunit protein uS2 (267 aa).

The interval 1–72 (MSGNEKEGLD…QLDEDVMPDE (72 aa)) is disordered. The span at 10–72 (DASDSDFDPS…QLDEDVMPDE (63 aa)) shows a compositional bias: acidic residues.

Belongs to the universal ribosomal protein uS2 family. In terms of processing, the N-terminus is blocked.

The chain is Small ribosomal subunit protein uS2 (rps2) from Haloarcula marismortui (strain ATCC 43049 / DSM 3752 / JCM 8966 / VKM B-1809) (Halobacterium marismortui).